We begin with the raw amino-acid sequence, 346 residues long: Uroporphyrinogen decarboxylase (346 aa).

Residues 21–25 (RQAGR), F40, D71, Y146, S201, and H316 contribute to the substrate site.

This sequence belongs to the uroporphyrinogen decarboxylase family. Homodimer.

It localises to the cytoplasm. The catalysed reaction is uroporphyrinogen III + 4 H(+) = coproporphyrinogen III + 4 CO2. The protein operates within porphyrin-containing compound metabolism; protoporphyrin-IX biosynthesis; coproporphyrinogen-III from 5-aminolevulinate: step 4/4. Its function is as follows. Catalyzes the decarboxylation of four acetate groups of uroporphyrinogen-III to yield coproporphyrinogen-III. The sequence is that of Uroporphyrinogen decarboxylase from Rickettsia conorii (strain ATCC VR-613 / Malish 7).